The following is a 212-amino-acid chain: N-(5'-phosphoribosyl)anthranilate isomerase (212 aa).

This sequence belongs to the TrpF family.

It carries out the reaction N-(5-phospho-beta-D-ribosyl)anthranilate = 1-(2-carboxyphenylamino)-1-deoxy-D-ribulose 5-phosphate. It participates in amino-acid biosynthesis; L-tryptophan biosynthesis; L-tryptophan from chorismate: step 3/5. The sequence is that of N-(5'-phosphoribosyl)anthranilate isomerase from Microcystis aeruginosa (strain NIES-843 / IAM M-2473).